The following is a 432-amino-acid chain: Enolase (432 aa).

A (2R)-2-phosphoglycerate-binding site is contributed by Q167. E209 serves as the catalytic Proton donor. D246, E290, and D317 together coordinate Mg(2+). (2R)-2-phosphoglycerate is bound by residues K342, R371, S372, and K393. K342 acts as the Proton acceptor in catalysis.

Belongs to the enolase family. As to quaternary structure, component of the RNA degradosome, a multiprotein complex involved in RNA processing and mRNA degradation. Mg(2+) is required as a cofactor.

The protein resides in the cytoplasm. It localises to the secreted. It is found in the cell surface. It carries out the reaction (2R)-2-phosphoglycerate = phosphoenolpyruvate + H2O. Its pathway is carbohydrate degradation; glycolysis; pyruvate from D-glyceraldehyde 3-phosphate: step 4/5. Catalyzes the reversible conversion of 2-phosphoglycerate (2-PG) into phosphoenolpyruvate (PEP). It is essential for the degradation of carbohydrates via glycolysis. The sequence is that of Enolase from Shigella sonnei (strain Ss046).